The chain runs to 159 residues: Phosphopantetheine adenylyltransferase (159 aa).

S9 contacts substrate. ATP is bound by residues 9–10 (SF) and H17. Residues K41, L73, and K87 each coordinate substrate. Residues 88 to 90 (GLR), E98, and 123 to 129 (YGYLSSS) contribute to the ATP site.

This sequence belongs to the bacterial CoaD family. In terms of assembly, homohexamer. The cofactor is Mg(2+).

Its subcellular location is the cytoplasm. It catalyses the reaction (R)-4'-phosphopantetheine + ATP + H(+) = 3'-dephospho-CoA + diphosphate. The protein operates within cofactor biosynthesis; coenzyme A biosynthesis; CoA from (R)-pantothenate: step 4/5. In terms of biological role, reversibly transfers an adenylyl group from ATP to 4'-phosphopantetheine, yielding dephospho-CoA (dPCoA) and pyrophosphate. This is Phosphopantetheine adenylyltransferase from Thermoanaerobacter pseudethanolicus (strain ATCC 33223 / 39E) (Clostridium thermohydrosulfuricum).